The following is a 235-amino-acid chain: CMP-N,N'-diacetyllegionaminic acid synthase (235 aa).

The protein belongs to the CMP-NeuNAc synthase family.

It carries out the reaction N,N-diacetyllegionaminate + CTP = CMP-N,N-diacetyllegionaminate + diphosphate. Functionally, involved in biosynthesis of legionaminic acid (5,7-diamino-3,5,7,9-tetradeoxy-D-glycero-D-galacto-non-2-ulosonic acid)(Leg), a sialic acid-like derivative that is incorporated into flagellin via O-linkage to Ser/Thr. Catalyzes the conversion of N,N'-diacetyllegionaminic acid (Leg5Ac7Ac) and CTP into CMP-N,N'-diacetyllegionaminic acid (CMP-Leg5Ac7Ac). In Campylobacter jejuni subsp. jejuni serotype O:2 (strain ATCC 700819 / NCTC 11168), this protein is CMP-N,N'-diacetyllegionaminic acid synthase (legF).